Reading from the N-terminus, the 545-residue chain is Leucine-rich repeat LGI family member 2 (545 aa).

The N-terminal stretch at 1–28 (MALRRGGCGALGLLLLLLGAACLIPRSA) is a signal peptide. The 37-residue stretch at 29–65 (QVRRLARCPATCSCTKESIICVGSSWVPRIVPGDISS) folds into the LRRNT domain. The N-linked (GlcNAc...) asparagine glycan is linked to Asn-70. 3 LRR repeats span residues 86–107 (SLQL…AFAG), 110–131 (HLEY…AFRG), and 134–155 (DLTH…VFSD). The 51-residue stretch at 167 to 217 (NKFECDCKAKWLYLWLKMTNSTVSDVLCIGPPEYQEKKLNDVTSFDYECTT) folds into the LRRCT domain. The N-linked (GlcNAc...) asparagine glycan is linked to Asn-186. 7 EAR repeats span residues 219-261 (DFVV…EWDH), 265-307 (NFRS…KYDE), 311-358 (KFVK…KWNS), 360-403 (GFYS…QWNK), 407-450 (KFVP…RWNS), 452-494 (QFVE…QWDK), and 498-540 (LFKK…EHII). A glycan (N-linked (GlcNAc...) asparagine) is linked at Asn-271. Asn-402 carries an N-linked (GlcNAc...) asparagine glycan.

In terms of tissue distribution, brain, heart and placenta.

It is found in the secreted. Functionally, required for the development of soma-targeting inhibitory GABAergic synapses made by parvalbumin-positive basket cells. This chain is Leucine-rich repeat LGI family member 2 (LGI2), found in Homo sapiens (Human).